The sequence spans 324 residues: tRNA U34 carboxymethyltransferase (324 aa).

Carboxy-S-adenosyl-L-methionine-binding positions include lysine 92, tryptophan 106, lysine 111, glycine 131, aspartate 153–threonine 155, isoleucine 181–glutamate 182, methionine 197, tyrosine 201, and arginine 316.

This sequence belongs to the class I-like SAM-binding methyltransferase superfamily. CmoB family. Homotetramer.

The enzyme catalyses carboxy-S-adenosyl-L-methionine + 5-hydroxyuridine(34) in tRNA = 5-carboxymethoxyuridine(34) in tRNA + S-adenosyl-L-homocysteine + H(+). In terms of biological role, catalyzes carboxymethyl transfer from carboxy-S-adenosyl-L-methionine (Cx-SAM) to 5-hydroxyuridine (ho5U) to form 5-carboxymethoxyuridine (cmo5U) at position 34 in tRNAs. The chain is tRNA U34 carboxymethyltransferase from Methylococcus capsulatus (strain ATCC 33009 / NCIMB 11132 / Bath).